Consider the following 261-residue polypeptide: tRNA pseudouridine synthase A (261 aa).

Aspartate 52 acts as the Nucleophile in catalysis. Position 111 (tyrosine 111) interacts with substrate.

The protein belongs to the tRNA pseudouridine synthase TruA family. In terms of assembly, homodimer.

The enzyme catalyses uridine(38/39/40) in tRNA = pseudouridine(38/39/40) in tRNA. Functionally, formation of pseudouridine at positions 38, 39 and 40 in the anticodon stem and loop of transfer RNAs. This chain is tRNA pseudouridine synthase A, found in Jannaschia sp. (strain CCS1).